We begin with the raw amino-acid sequence, 105 residues long: Nucleoid-associated protein EAT1b_1710 (105 aa).

Over residues 1–16 (MRGMGNMNNMMKQMQK) the composition is skewed to low complexity. Residues 1-26 (MRGMGNMNNMMKQMQKMQKDMAKAQE) form a disordered region. Basic and acidic residues predominate over residues 17 to 26 (MQKDMAKAQE).

This sequence belongs to the YbaB/EbfC family. In terms of assembly, homodimer.

The protein resides in the cytoplasm. Its subcellular location is the nucleoid. Its function is as follows. Binds to DNA and alters its conformation. May be involved in regulation of gene expression, nucleoid organization and DNA protection. This chain is Nucleoid-associated protein EAT1b_1710, found in Exiguobacterium sp. (strain ATCC BAA-1283 / AT1b).